A 79-amino-acid polypeptide reads, in one-letter code: MWIYILVGIICLLAGLAGGFFIARRYMMSYLKNNPPINEQMLQMMMAQMGQKPSQKKINQMMSAMNKQQEKEKPKKAKK.

A helical transmembrane segment spans residues 2–22; the sequence is WIYILVGIICLLAGLAGGFFI. Over residues 57 to 66 the composition is skewed to polar residues; sequence KINQMMSAMN. A disordered region spans residues 57 to 79; the sequence is KINQMMSAMNKQQEKEKPKKAKK.

Belongs to the UPF0154 family.

It is found in the cell membrane. The protein is UPF0154 protein lwe1321 of Listeria welshimeri serovar 6b (strain ATCC 35897 / DSM 20650 / CCUG 15529 / CIP 8149 / NCTC 11857 / SLCC 5334 / V8).